A 533-amino-acid chain; its full sequence is MSSLLPPHAQILVVGGGPAGSYCASILAREGFSVVVLEATTFPRYHIGESMLPSVRPFLKFSGADNKIASHGFCPKPGAAVKFQQHKREGYTDFSTLSSGNSPDNAAAWNVKRSEFDEILLRHAEELGAQVFENHRVINLIFADNNVSEGRPISAEFSCPNGELRSISFDYLVDASGRAGIMSTKYLKNRKFNNTLRNVASWGYWTGAKRYMPGSERDNAPFFEALTDGSGWAWFIPLHDSTVSVGIVTDQASSTARKALSARNGMHCSSKADYLAQLKLAPTVSGKFLCKATLQGENSPTCIRSASDFSYAADRYSGDHFRLIGDASAFIDPFFSSGVHLALLGALTAAASISASIRKTCSELRAAQFHDKKVAIAYTRFLLVVMGVYKQIRNQDLHILAEVDEDNFDRAFDILRPVIQGTADVGKTVSEDELQKTMDFCKDIFAPTDPQMHEAVGARLGPELCSPSVPIMTDSEIEDLTKDDNEAKLVLKEINARKAVHTMYGGPIHVAAESIDGLVLNLEVGNFGLKNVH.

3 residues coordinate FAD: Gly-16, Ala-19, and Glu-49. Chloride is bound by residues Ser-337 and Gly-338. FAD is bound at residue Val-339.

It belongs to the flavin-dependent halogenase family.

It carries out the reaction melleolide F + FADH2 + chloride + O2 = 6'-chloromelleolide F + FAD + 2 H2O + H(+). It catalyses the reaction melleolide F + bromide + FADH2 + O2 = 6'-bromomelleolide F + FAD + 2 H2O. Functionally, flavin-dependent halogenase involved in the biosynthesis of melleolides, a range of antifungal and phytotoxic polyketide derivatives composed of an orsellinic acid (OA) moiety esterified to various sesquiterpene alcohols. The halogenase catalyzes the transfer of a single chlorine atom to the melleolide backbone, resulting in a 6'-chloromelleolide product. The enzyme acts on free substrate and does not depend on carrier-protein-dependent acceptor molecules. Can also catalyze the transfer of a single bromine atom to the melleolide backbone in vitro. The polypeptide is Flavin-dependent halogenase armH4 (Armillaria mellea (Honey mushroom)).